A 99-amino-acid chain; its full sequence is Nucleoid-associated protein SAG1747 (99 aa).

Positions 1–10 (MMNMQNMMRQ) are enriched in low complexity. A disordered region spans residues 1–20 (MMNMQNMMRQAQKLQKQMEQ).

The protein belongs to the YbaB/EbfC family. In terms of assembly, homodimer.

It is found in the cytoplasm. Its subcellular location is the nucleoid. Binds to DNA and alters its conformation. May be involved in regulation of gene expression, nucleoid organization and DNA protection. The chain is Nucleoid-associated protein SAG1747 from Streptococcus agalactiae serotype V (strain ATCC BAA-611 / 2603 V/R).